Reading from the N-terminus, the 548-residue chain is Solute carrier family 22 member 7 (548 aa).

The next 12 helical transmembrane spans lie at 21–41 (VALLALPRVLLPLHFLLPIFL), 146–166 (AASTFFFAGVLVGAVAFGYLS), 180–200 (VSTLVLGLASAASVSYVMFAI), 204–224 (LTGSALAGFTIIVMPLELEWL), 234–254 (VLSSTFWTGGMMLLALVGYLI), 259–279 (WLLLAVTLPCAPGILSLWWVP), 346–366 (ISLCCVVVWFGVNFSYYGLSL), 376–397 (YQTQLLFGAVELPSKLLVYLSV), 404–423 (LTQAGTLLGTALAFGTRLLV), 432–452 (TVLAVMGKAFSEAAFTTAYLF), 466–486 (MGLTALVGRLGGSLAPLAALL), and 493–513 (LPKLTYGGIALLAAGTALLLP). The tract at residues 522–548 (ETIQDVERKSAPTSLQEEEMPMKQVQN) is disordered.

Belongs to the major facilitator (TC 2.A.1) superfamily. Organic cation transporter (TC 2.A.1.19) family.

Its subcellular location is the basolateral cell membrane. The protein resides in the apical cell membrane. The protein localises to the cell membrane. The catalysed reaction is orotate(out) + L-glutamate(in) = orotate(in) + L-glutamate(out). It catalyses the reaction 3',5'-cyclic GMP(in) = 3',5'-cyclic GMP(out). The enzyme catalyses GMP(in) = GMP(out). It carries out the reaction 2'-deoxyguanosine(in) = 2'-deoxyguanosine(out). The catalysed reaction is GDP(in) = GDP(out). It catalyses the reaction guanosine(in) = guanosine(out). The enzyme catalyses GTP(in) = GTP(out). It carries out the reaction 3',5'-cyclic AMP(in) = 3',5'-cyclic AMP(out). The catalysed reaction is creatinine(in) = creatinine(out). It catalyses the reaction prostaglandin E2(out) = prostaglandin E2(in). The enzyme catalyses 2-oxoglutarate(in) = 2-oxoglutarate(out). It carries out the reaction glutarate(in) = glutarate(out). The catalysed reaction is urate(out) = urate(in). It catalyses the reaction estrone 3-sulfate(out) = estrone 3-sulfate(in). Functionally, functions as a Na(+)-independent bidirectional multispecific transporter. Contributes to the renal and hepatic elimination of endogenous organic compounds from the systemic circulation into the urine and bile, respectively. Capable of transporting a wide range of purine and pyrimidine nucleobases, nucleosides and nucleotides, with cGMP, 2'deoxyguanosine and GMP being the preferred substrates. Functions as a pH- and chloride-independent cGMP bidirectional facilitative transporter that can regulate both intracellular and extracellular levels of cGMP and may be involved in cGMP signaling pathways. Mediates orotate/glutamate bidirectional exchange and most likely display a physiological role in hepatic release of glutamate into the blood. Involved in renal secretion and possible reabsorption of creatinine. Able to uptake prostaglandin E2 (PGE2) and may contribute to PGE2 renal excretion. Also transports alpha-ketoglutarate and urate. Apart from the orotate/glutamate exchange, the counterions for the uptake of other SLC22A7/OAT2 substrates remain to be identified. The polypeptide is Solute carrier family 22 member 7 (SLC22A7) (Pongo abelii (Sumatran orangutan)).